Here is a 159-residue protein sequence, read N- to C-terminus: Protein-export protein SecB (159 aa).

This sequence belongs to the SecB family. As to quaternary structure, homotetramer, a dimer of dimers. One homotetramer interacts with 1 SecA dimer.

The protein resides in the cytoplasm. One of the proteins required for the normal export of preproteins out of the cell cytoplasm. It is a molecular chaperone that binds to a subset of precursor proteins, maintaining them in a translocation-competent state. It also specifically binds to its receptor SecA. This chain is Protein-export protein SecB, found in Hahella chejuensis (strain KCTC 2396).